Consider the following 121-residue polypeptide: Large ribosomal subunit protein bL12 (121 aa).

The protein belongs to the bacterial ribosomal protein bL12 family. As to quaternary structure, homodimer. Part of the ribosomal stalk of the 50S ribosomal subunit. Forms a multimeric L10(L12)X complex, where L10 forms an elongated spine to which 2 to 4 L12 dimers bind in a sequential fashion. Binds GTP-bound translation factors.

In terms of biological role, forms part of the ribosomal stalk which helps the ribosome interact with GTP-bound translation factors. Is thus essential for accurate translation. In Acinetobacter baylyi (strain ATCC 33305 / BD413 / ADP1), this protein is Large ribosomal subunit protein bL12.